We begin with the raw amino-acid sequence, 599 residues long: mRNA export factor MEX67 (599 aa).

An N-acetylserine modification is found at Ser2. 2 LRR repeats span residues 163–184 (IVESVNLADNQLKDISAISTLA) and 189–210 (NLKNLCLANNQIFRFRSLEVWK). An LRRCT domain is found at 224-262 (NPITTDKLYRTEMLRLFPKLVVLDNVIVRDEQKLQTVYS). The region spanning 280 to 467 (SSTDFATNFL…VIIASDLLTV (188 aa)) is the NTF2 domain. The disordered stretch occupies residues 408–439 (KPELESNKKTGKNNYQKNRRYNHGYNSTSNNK). Positions 546–599 (PVQLELLNKLHLETKLNAEYTFMLAEQSNWNYEVAIKGFQSSMNGIPREAFVQF) constitute a TAP-C domain.

It belongs to the NXF family. Interacts with nucleoporin complex NUP84 and MTR2. Interacts with MIP6.

The protein localises to the nucleus. Its subcellular location is the cytoplasm. Functionally, involved in the export of mRNA from the nucleus to the cytoplasm. In Saccharomyces cerevisiae (strain ATCC 204508 / S288c) (Baker's yeast), this protein is mRNA export factor MEX67 (MEX67).